Consider the following 493-residue polypeptide: Glutathione hydrolase 6 (493 aa).

Topologically, residues 1 to 54 (MERAEEPVVYQKLLPWEPSLESEEEVEEEETSEALVLNPRRHQDSSRNKAGGLP) are cytoplasmic. Positions 19–52 (SLESEEEVEEEETSEALVLNPRRHQDSSRNKAGG) are disordered. The span at 20–32 (LESEEEVEEEETS) shows a compositional bias: acidic residues. Residues 55–75 (GTWARVVAALLLLAVGCSLAV) traverse the membrane as a helical; Signal-anchor for type II membrane protein segment. Over 76–493 (RQLQNQGRST…PHACCPFQGF (418 aa)) the chain is Extracellular. Residues 83–105 (RSTGSLGSVAPPPGGHSHGPGVY) are disordered. 2 N-linked (GlcNAc...) asparagine glycosylation sites follow: Asn161 and Asn370. Residues 442–455 (PPTQAQHQHQGQQE) are compositionally biased toward low complexity. Residues 442 to 464 (PPTQAQHQHQGQQEPTEHPSTCG) are disordered.

It belongs to the gamma-glutamyltransferase family. As to quaternary structure, heterodimer composed of the light and heavy chains. The active site is located in the light chain. In terms of processing, cleaved by autocatalysis into a large and a small subunit and the autocatalytic cleavage is essential to the functional activation of the enzyme.

The protein localises to the membrane. It catalyses the reaction an N-terminal (5-L-glutamyl)-[peptide] + an alpha-amino acid = 5-L-glutamyl amino acid + an N-terminal L-alpha-aminoacyl-[peptide]. The enzyme catalyses glutathione + H2O = L-cysteinylglycine + L-glutamate. It carries out the reaction an S-substituted glutathione + H2O = an S-substituted L-cysteinylglycine + L-glutamate. The protein operates within sulfur metabolism; glutathione metabolism. In terms of biological role, hydrolyzes and transfers gamma-glutamyl moieties from glutathione and other gamma-glutamyl compounds to acceptors. This Homo sapiens (Human) protein is Glutathione hydrolase 6.